Here is a 652-residue protein sequence, read N- to C-terminus: MPTTPLLLAALAALAALAVAAYPSCSPGPDPSGKCQRLASTHSATCVDLHLRTCADAAYNHTSFPTPLEHRSWEAVEASPEYTLLGVLHFLLEGQCNPDLRLLGCSVLAPRCQGGHTQRPCRRVCEGLREACQPAFDAIDMAWPYFLDCTQYFAPEEEGCYDPLEQLRGELDVEEALPSGLPPTFIRFAHHSYAQMVRVLKRTAARCSQVAKTYSIGRSFEGKDLVVIEFSSRPGQHELMEPEVKLIGNIHGNEVAGREILIYLAQYLCSEYLLGNPRIQRLLNTTRIHLLPSMNPDGYEVAAAEGAGYNGWTSGRQNAQNLDLNRNFPDLTSEYYRLASTRGVRTDHIPISQYYWWGKVAPETKAIMKWIQTIPFVLSASLHGGDLVVSYPFDFSKHPHEEKMFSPTPDEKMFKLLARAYADVHPMMMDRSENRCGGNFLKRGSIINGADWYSFTGGMSDFNYLHTNCFEITVELGCVKFPPEEALYGLWQHNKEPLLNFLEMVHRGIKGVVTDKYGKPVKNARILVKGIRHDVTTAPDGDYWRLLPPGSHIVIAQAPGYSKVMKRVTIPLRMKRAGRVDFILQPLGTGPKNFLPGPSRALPRSLDPQGAPAQLDFEPPRARRQPASGSKPWWWAYFTSLSPHKPRWLLKY.

Positions 1 to 20 are cleaved as a signal peptide; the sequence is MPTTPLLLAALAALAALAVA. The 123-residue stretch at 41–163 folds into the FZ domain; the sequence is THSATCVDLH…APEEEGCYDP (123 aa). 5 disulfide bridges follow: Cys46–Cys112, Cys54–Cys105, Cys96–Cys132, Cys121–Cys160, and Cys125–Cys149. The N-linked (GlcNAc...) asparagine glycan is linked to Asn60. One can recognise a Peptidase M14 domain in the interval 189 to 505; it reads AHHSYAQMVR…EPLLNFLEMV (317 aa). His251 and Glu254 together coordinate Zn(2+). Residue Asn284 is glycosylated (N-linked (GlcNAc...) asparagine). Residue His383 participates in Zn(2+) binding. Glu475 serves as the catalytic Proton donor/acceptor. Residues 594-628 are disordered; that stretch reads FLPGPSRALPRSLDPQGAPAQLDFEPPRARRQPAS.

It belongs to the peptidase M14 family. Zn(2+) serves as cofactor. Abundantly expressed in the placenta, with low to moderate levels in the brain, lung, thymus and kidney.

The protein resides in the secreted. The protein localises to the extracellular space. It is found in the extracellular matrix. Its activity is regulated as follows. Inhibited by 2-mercaptomethyl-3-guanidinoethylthiopropanoic acid (MGTA) and guanidinoethylmercaptosuccinic acid (GEMSA). Inhibited by chelating agents such as EDTA and EGTA. Functionally, cleaves substrates with C-terminal arginine residues. Probably modulates the Wnt signaling pathway, by cleaving some undefined protein. May play a role in cleavage during prohormone processing. The protein is Carboxypeptidase Z (Cpz) of Rattus norvegicus (Rat).